Consider the following 240-residue polypeptide: Ribosomal RNA small subunit methyltransferase G (240 aa).

S-adenosyl-L-methionine is bound by residues Gly79, Phe84, 130–131 (AE), and Arg149.

It belongs to the methyltransferase superfamily. RNA methyltransferase RsmG family.

It is found in the cytoplasm. Its function is as follows. Specifically methylates the N7 position of a guanine in 16S rRNA. This Desulforamulus reducens (strain ATCC BAA-1160 / DSM 100696 / MI-1) (Desulfotomaculum reducens) protein is Ribosomal RNA small subunit methyltransferase G.